The sequence spans 191 residues: MDEHIINLPFSNSLNSIDIVPLYLLTDKKIIDIAFEEIIGLIFHANFNLACDRTYKKHAYWDFLYKKFVKDIEKQNLAGWPIMTVNKNDYFNRIDIISIEKPFIDTDNILTLLHRLLYIENYKINAGYDNPVLKFKFIKLSCLEHSNIVENVSLYDLFSLLEKYLTYYVSKYGNVGNIENSLGSRILGLMR.

This is an uncharacterized protein from Acanthamoeba polyphaga (Amoeba).